We begin with the raw amino-acid sequence, 374 residues long: Very late expression factor 1 (374 aa).

The Tyr recombinase domain occupies 169–349 (AIDTILNFID…NFDESSSDEE (181 aa)). Catalysis depends on residues Arg-210, Lys-239, Arg-303, and His-326. The interval 328–374 (SPASTKPYLNKYNFDESSSDEESGGNNRDSSTGSSANSSSLYYQTGD) is disordered. Tyr-335 serves as the catalytic O-(3'-phospho-DNA)-tyrosine intermediate. Residues 357–367 (SSTGSSANSSS) show a composition bias toward low complexity.

The protein belongs to the 'phage' integrase family.

Involved in very late gene activation. The polypeptide is Very late expression factor 1 (VLF-1) (Orgyia pseudotsugata (Douglas-fir tussock moth)).